The primary structure comprises 431 residues: 3-phosphoshikimate 1-carboxyvinyltransferase (431 aa).

Residues Lys-26, Ser-27, and Arg-31 each contribute to the 3-phosphoshikimate site. Phosphoenolpyruvate is bound at residue Lys-26. Phosphoenolpyruvate is bound by residues Gly-100 and Arg-129. The 3-phosphoshikimate site is built by Ser-175, Ser-176, Gln-177, Asp-308, and Gln-335. Gln-177 is a binding site for phosphoenolpyruvate. The Proton acceptor role is filled by Asp-308. Residues Arg-339, Arg-381, and Lys-412 each coordinate phosphoenolpyruvate.

Belongs to the EPSP synthase family. As to quaternary structure, monomer.

It localises to the cytoplasm. It catalyses the reaction 3-phosphoshikimate + phosphoenolpyruvate = 5-O-(1-carboxyvinyl)-3-phosphoshikimate + phosphate. It participates in metabolic intermediate biosynthesis; chorismate biosynthesis; chorismate from D-erythrose 4-phosphate and phosphoenolpyruvate: step 6/7. Catalyzes the transfer of the enolpyruvyl moiety of phosphoenolpyruvate (PEP) to the 5-hydroxyl of shikimate-3-phosphate (S3P) to produce enolpyruvyl shikimate-3-phosphate and inorganic phosphate. This chain is 3-phosphoshikimate 1-carboxyvinyltransferase, found in Opitutus terrae (strain DSM 11246 / JCM 15787 / PB90-1).